A 513-amino-acid polypeptide reads, in one-letter code: Probable hydrolase YhcX (513 aa).

Positions Met-14–Val-212 constitute an N-acetyltransferase domain. The CN hydrolase domain occupies Val-229–Leu-484. Catalysis depends on Glu-270, which acts as the Proton acceptor. Lys-345 functions as the Proton donor in the catalytic mechanism. Cys-379 serves as the catalytic Nucleophile.

The protein belongs to the carbon-nitrogen hydrolase superfamily. NIT1/NIT2 family.

The polypeptide is Probable hydrolase YhcX (yhcX) (Bacillus subtilis (strain 168)).